The sequence spans 345 residues: Uroporphyrinogen decarboxylase (345 aa).

Residues 27–31 (RQAGR), Phe-46, Asp-76, Tyr-152, Ser-207, and His-321 each bind substrate.

The protein belongs to the uroporphyrinogen decarboxylase family. In terms of assembly, homodimer.

Its subcellular location is the cytoplasm. It carries out the reaction uroporphyrinogen III + 4 H(+) = coproporphyrinogen III + 4 CO2. It participates in porphyrin-containing compound metabolism; protoporphyrin-IX biosynthesis; coproporphyrinogen-III from 5-aminolevulinate: step 4/4. Catalyzes the decarboxylation of four acetate groups of uroporphyrinogen-III to yield coproporphyrinogen-III. This Staphylococcus aureus (strain MRSA252) protein is Uroporphyrinogen decarboxylase.